We begin with the raw amino-acid sequence, 835 residues long: MMPLLHLAGTLIMALFLSCLRPGSLNPCIEVLPNITYQCMDQNLSKIPHDIPYSTKNLDLSFNPLKILRSYSFTNFSQLQWLDLSRCEIETIEDKAWHGLNQLSTLVLTGNPIKSFSPGSFSGLTNLENLVAVETKMTSLEGFHIGQLISLKKLNVAHNLIHSFKLPEYFSNLTNLEHVDLSYNYIQTISVKDLQFLRENPQVNLSLDLSLNPIDSIQAQAFQGIRLHELTLRSNFNSSNVLKMCLQNMTGLHVHRLILGEFKNERNLESFDRSVMEGLCNVSIDEFRLTYINHFSDDIYNLNCLANISAMSFTGVHIKHIADVPRHFKWQSLSIIRCHLKPFPKLSLPFLKSWTLTTNREDISFGQLALPSLRYLDLSRNAMSFRGCCSYSDFGTNNLKYLDLSFNGVILMSANFMGLEELEYLDFQHSTLKKVTEFSVFLSLEKLLYLDISYTNTKIDFDGIFLGLISLNTLKMAGNSFKDNTLSNVFTNTTNLTFLDLSKCQLEQISRGVFDTLYRLQLLNMSHNNLLFLDPSHYKQLYSLRTLDCSFNRIETSKGILQHFPKSLAVFNLTNNSVACICEYQNFLQWVKDQKMFLVNVEQMKCASPIDMKASLVLDFTNSTCYIYKTIISVSVVSVLVVATVAFLIYHFYFHLILIAGCKKYSRGESIYDAFVIYSSQNEDWVRNELVKNLEEGVPRFQLCLHYRDFIPGVAIAANIIQEGFHKSRKVIVVVSRHFIQSRWCIFEYEIAQTWQFLSSRSGIIFIVLEKVEKSLLRQQVELYRLLSRNTYLEWEDNALGRHIFWRRLKKALLDGKALNPDETSEEEQEATTLT.

Positions 1–25 (MMPLLHLAGTLIMALFLSCLRPGSL) are cleaved as a signal peptide. The Extracellular portion of the chain corresponds to 26–638 (NPCIEVLPNI…KTIISVSVVS (613 aa)). The cysteines at positions 28 and 39 are disulfide-linked. Residues Asn-34, Asn-43, and Asn-75 are each glycosylated (N-linked (GlcNAc...) asparagine). 5 LRR repeats span residues 54 to 75 (STKN…SFTN), 78 to 99 (QLQW…AWHG), 102 to 123 (QLST…SFSG), 126 to 147 (NLEN…HIGQ), and 150 to 171 (SLKK…EYFS). N-linked (GlcNAc...) asparagine glycosylation is present at Asn-172. 3 LRR repeats span residues 175-198 (NLEH…QFLR), 204-224 (NLSL…AFQG), and 226-247 (RLHE…MCLQ). 5 N-linked (GlcNAc...) asparagine glycosylation sites follow: Asn-204, Asn-237, Asn-248, Asn-281, and Asn-307. Residues Cys-280 and Cys-304 are joined by a disulfide bond. Residues 372-381 (SLRYLDLSRN) form an LRR 9 repeat. Cys-388 and Cys-389 are oxidised to a cystine. 4 LRR repeats span residues 398 to 420 (NLKY…MGLE), 421 to 442 (ELEY…SVFL), 446 to 467 (KLLY…IFLG), and 470 to 491 (SLNT…NVFT). 3 N-linked (GlcNAc...) asparagine glycosylation sites follow: Asn-492, Asn-495, and Asn-524. LRR repeat units follow at residues 495 to 516 (NLTF…VFDT), 519 to 540 (RLQL…HYKQ), and 543 to 564 (SLRT…LQHF). Asn-572 and Asn-575 each carry an N-linked (GlcNAc...) asparagine glycan. The LRRCT domain maps to 576–627 (NSVACICEYQNFLQWVKDQKMFLVNVEQMKCASPIDMKASLVLDFTNSTCYI). Intrachain disulfides connect Cys-580/Cys-606 and Cys-582/Cys-625. N-linked (GlcNAc...) asparagine glycosylation occurs at Asn-622. A helical membrane pass occupies residues 639 to 659 (VLVVATVAFLIYHFYFHLILI). Topologically, residues 660-835 (AGCKKYSRGE…EEEQEATTLT (176 aa)) are cytoplasmic. The region spanning 670 to 813 (SIYDAFVIYS…IFWRRLKKAL (144 aa)) is the TIR domain.

It belongs to the Toll-like receptor family. Belongs to the lipopolysaccharide (LPS) receptor, a multi-protein complex containing at least CD14, LY96 and TLR4. Binding to bacterial LPS leads to homodimerization. Interacts with LY96 via the extracellular domain. Interacts with MYD88 and TIRAP via their respective TIR domains. Interacts with TICAM2. Interacts with NOX4. Interacts with CNPY3 and HSP90B1; this interaction is required for proper folding in the endoplasmic reticulum. Interacts with MAP3K21; this interaction leads to negative regulation of TLR4 signaling. Interacts with CD36, following CD36 stimulation by oxLDL or amyloid-beta 42, and forms a heterodimer with TLR6. The trimeric complex is internalized and triggers inflammatory response. LYN kinase activity facilitates TLR4-TLR6 heterodimerization and signal initiation. Interacts with TICAM1 in response to LPS in a WDFY1-dependent manner. Interacts with WDFY1 in response to LPS. Interacts with SMPDL3B. Interacts with CEACAM1; upon lipopolysaccharide stimulation, forms a complex including TLR4 and the phosphorylated form of SYK and CEACAM1, which in turn, recruits PTPN6 that dephosphorylates SYK, reducing the production of reactive oxygen species (ROS) and lysosome disruption, which in turn, reduces the activity of the inflammasome. Interacts with RFTN1; the interaction occurs in response to lipopolysaccharide stimulation. Interacts with SCIMP; the interaction occurs in response to lipopolysaccharide stimulation and is enhanced by phosphorylation of SCIMP by LYN. This interaction facilitates the phosphorylation of TLR4 by LYN which elicits a selective cytokine response in macrophages. Interacts with TRAF3IP3. Interacts with TREM1; this interaction enhances TLR4-mediated inflammatory response. Interacts with ZG16B/PAUF. Interacts with CD82; this interaction inhibits TLR4-mediated signaling pathway. Phosphorylated on tyrosine residues by LYN after binding lipopolysaccharide. Post-translationally, ubiquitinated by RNF128 via 'Lys-28'-linked polyubiquitin chains, leading to proteasomal degradation.

It is found in the cell membrane. Its subcellular location is the early endosome. It localises to the cell projection. The protein resides in the ruffle. Transmembrane receptor that functions as a pattern recognition receptor recognizing pathogen- and damage-associated molecular patterns (PAMPs and DAMPs) to induce innate immune responses via downstream signaling pathways. At the plasma membrane, cooperates with LY96 to mediate the innate immune response to bacterial lipopolysaccharide (LPS). Also involved in LPS-independent inflammatory responses triggered by free fatty acids, such as palmitate, and Ni(2+). Mechanistically, acts via MYD88, TIRAP and TRAF6, leading to NF-kappa-B activation, cytokine secretion and the inflammatory response. Alternatively, CD14-mediated TLR4 internalization via endocytosis is associated with the initiation of a MYD88-independent signaling via the TICAM1-TBK1-IRF3 axis leading to type I interferon production. In addition to the secretion of proinflammatory cytokines, initiates the activation of NLRP3 inflammasome and formation of a positive feedback loop between autophagy and NF-kappa-B signaling cascade. In complex with TLR6, promotes inflammation in monocytes/macrophages by associating with TLR6 and the receptor CD86. Upon ligand binding, such as oxLDL or amyloid-beta 42, the TLR4:TLR6 complex is internalized and triggers inflammatory response, leading to NF-kappa-B-dependent production of CXCL1, CXCL2 and CCL9 cytokines, via MYD88 signaling pathway, and CCL5 cytokine, via TICAM1 signaling pathway. In myeloid dendritic cells, vesicular stomatitis virus glycoprotein G but not LPS promotes the activation of IRF7, leading to type I IFN production in a CD14-dependent manner. In Rattus norvegicus (Rat), this protein is Toll-like receptor 4 (Tlr4).